Reading from the N-terminus, the 478-residue chain is Serine hydroxymethyltransferase, cytosolic (478 aa).

Residue lysine 251 is modified to N6-(pyridoxal phosphate)lysine.

It belongs to the SHMT family. As to quaternary structure, homotetramer. Identified in complex with FAM175B and the other subunits of the BRISC complex, at least composed of FAM175B/ABRO1, BRCC3/BRCC36, BABAM2 and BABAM1/NBA1. Pyridoxal 5'-phosphate is required as a cofactor.

The protein resides in the cytoplasm. It catalyses the reaction (6R)-5,10-methylene-5,6,7,8-tetrahydrofolate + glycine + H2O = (6S)-5,6,7,8-tetrahydrofolate + L-serine. It functions in the pathway one-carbon metabolism; tetrahydrofolate interconversion. Interconversion of serine and glycine. This is Serine hydroxymethyltransferase, cytosolic (Shmt1) from Mus musculus (Mouse).